A 595-amino-acid chain; its full sequence is MLPVQTSNLAAAFTDAVRALAPADATLPAVTFERPKVAAHGDLACNVAMQVARALKSNPRELAQRIVAAVEADARAQGLVAGMDIAGPGFINLRLTPSAKADVLRAVLNEGDHYGARERGVHGQVLVEFVSANPTGPLHVGHGRQAALGDALANLLSWQGWHVHREFYYNDAGVQIQTLALSVQARARGLKPGDASWPEAAYNGDYIADIAADFLAGKTVSASDGEPVTASGNVEDIDSIRKFAVTYLRNEQDIDLQAFGVKFDRYYLESSLYSDGRVDAAVQSLIDKGKTYESEGALWLRTTDDGDDKDRVMKKSDGTYTYFVPDVAYHTTKWERGFTKVINVQGSDHHGTIARVRAGLQGLDIGIPQGYPDYVLHKMVTVMKNGEEVKISKRAGSYVTVRDLIEWSNGGDETIRGCLEQGVADWPAHFTRGRDAVRFFLLSRKADTEFVFDVDLALKQNDENPVYYVQYAHARICSIFESWGGADWESRLAELAGADLSAVTGADASAQALALGRRLAEFPDMLAAAAAELAPHAVAFYLRDLAGDFHAFYNADRVLVDDEAVKRARLALLAATRQVLRNGLAVIGVSAPRRM.

Residues 132 to 142 carry the 'HIGH' region motif; that stretch reads ANPTGPLHVGH.

It belongs to the class-I aminoacyl-tRNA synthetase family. In terms of assembly, monomer.

It is found in the cytoplasm. The enzyme catalyses tRNA(Arg) + L-arginine + ATP = L-arginyl-tRNA(Arg) + AMP + diphosphate. This is Arginine--tRNA ligase from Cupriavidus taiwanensis (strain DSM 17343 / BCRC 17206 / CCUG 44338 / CIP 107171 / LMG 19424 / R1) (Ralstonia taiwanensis (strain LMG 19424)).